The primary structure comprises 418 residues: ATP-dependent Clp protease ATP-binding subunit ClpX (418 aa).

Residues 1 to 54 (MTRKDDESDQFFCSFCGKNQKEVKKLIAGPSVYICNECVSLCEEIIEDEDKESL) enclose the ClpX-type ZB domain. Zn(2+) contacts are provided by Cys-13, Cys-16, Cys-35, and Cys-38. 120-127 (PTGCGKTL) serves as a coordination point for ATP.

The protein belongs to the ClpX chaperone family. Component of the ClpX-ClpP complex. Forms a hexameric ring that, in the presence of ATP, binds to fourteen ClpP subunits assembled into a disk-like structure with a central cavity, resembling the structure of eukaryotic proteasomes.

Its function is as follows. ATP-dependent specificity component of the Clp protease. It directs the protease to specific substrates. Can perform chaperone functions in the absence of ClpP. The chain is ATP-dependent Clp protease ATP-binding subunit ClpX from Desulforapulum autotrophicum (strain ATCC 43914 / DSM 3382 / VKM B-1955 / HRM2) (Desulfobacterium autotrophicum).